Reading from the N-terminus, the 188-residue chain is Elongation factor P (188 aa).

The protein belongs to the elongation factor P family.

The protein localises to the cytoplasm. The protein operates within protein biosynthesis; polypeptide chain elongation. Involved in peptide bond synthesis. Stimulates efficient translation and peptide-bond synthesis on native or reconstituted 70S ribosomes in vitro. Probably functions indirectly by altering the affinity of the ribosome for aminoacyl-tRNA, thus increasing their reactivity as acceptors for peptidyl transferase. The chain is Elongation factor P from Stutzerimonas stutzeri (strain A1501) (Pseudomonas stutzeri).